Here is a 685-residue protein sequence, read N- to C-terminus: Putative mannosyltransferase YycA (685 aa).

6 helical membrane-spanning segments follow: residues 6 to 26, 68 to 88, 109 to 129, 154 to 174, 176 to 196, and 204 to 224; these read FDAA…YHIW, VLWI…SVII, FGVG…IAVA, AVKQ…GLAF, MKMM…LIAS, and IGSL…WAIA. Positions 269–347 are disordered; the sequence is MNAAGGGNMQ…GGGGGKSVNM (79 aa). Over residues 277 to 286 the composition is skewed to polar residues; sequence MQNQDNMQAP. Over residues 287–303 the composition is skewed to low complexity; sequence NGNGSSFSQNGNQSFGN. The segment covering 318 to 343 has biased composition (gly residues); that stretch reads LNGGGGTPPTGGNGPGNGGPGGGGGK. The next 7 membrane-spanning stretches (helical) occupy residues 363–383, 399–419, 422–442, 455–475, 479–499, 513–533, and 573–593; these read LSGQ…GAII, TLFW…AGFF, YYLI…WYTM, YLLP…LSAY, IGSV…LALL, IISL…PLLY, and TGEE…YIIY. The segment at 652-685 is disordered; it reads TSDEYSGSSSSTNSVQGMRRGPGGESQQTLYLVE. The span at 654-665 shows a compositional bias: low complexity; that stretch reads DEYSGSSSSTNS. Over residues 676-685 the composition is skewed to polar residues; sequence ESQQTLYLVE.

This sequence belongs to the glycosyltransferase 39 family.

It localises to the cell membrane. The polypeptide is Putative mannosyltransferase YycA (yycA) (Bacillus subtilis (strain 168)).